A 576-amino-acid polypeptide reads, in one-letter code: POU domain, class 6, transcription factor 1 (576 aa).

The segment at 65–88 (PAEAGSCDPDHSAEATVAARSPSE) is disordered. The POU-specific domain maps to 414–488 (EDGINLEEIR…VLEKWLMEAE (75 aa)). Positions 509–568 (KRKRRTSFTPQAIEALNAYFEKNPLPTGQEITEIAKELNYDREVVRVWFCNRRQTLKNTS) form a DNA-binding region, homeobox.

This sequence belongs to the POU transcription factor family. Class-6 subfamily. Isoform C1 and isoform C2 are found in the brain, while isoform C7 is found in the testis.

It is found in the nucleus. Transcription factor that binds preferentially to a variant of the octamer motif (5'-ATGATAAT-3'). This is POU domain, class 6, transcription factor 1 (Pou6f1) from Mus musculus (Mouse).